The following is a 206-amino-acid chain: Holliday junction branch migration complex subunit RuvA (206 aa).

The domain I stretch occupies residues 1 to 62 (MYDYLKGLIT…EDAQVLYGFP (62 aa)). The domain II stretch occupies residues 63 to 141 (NLDQRELFRK…SLLETIELPS (79 aa)). A flexible linker region spans residues 142–152 (TEDELPLFGVH). The interval 153-206 (PYKHELEEAILALAALGYSEKELEKIRPLLEDNDKLETTDAYMKQALQLLLKLK) is domain III.

It belongs to the RuvA family. As to quaternary structure, homotetramer. Forms an RuvA(8)-RuvB(12)-Holliday junction (HJ) complex. HJ DNA is sandwiched between 2 RuvA tetramers; dsDNA enters through RuvA and exits via RuvB. An RuvB hexamer assembles on each DNA strand where it exits the tetramer. Each RuvB hexamer is contacted by two RuvA subunits (via domain III) on 2 adjacent RuvB subunits; this complex drives branch migration. In the full resolvosome a probable DNA-RuvA(4)-RuvB(12)-RuvC(2) complex forms which resolves the HJ.

It localises to the cytoplasm. In terms of biological role, the RuvA-RuvB-RuvC complex processes Holliday junction (HJ) DNA during genetic recombination and DNA repair, while the RuvA-RuvB complex plays an important role in the rescue of blocked DNA replication forks via replication fork reversal (RFR). RuvA specifically binds to HJ cruciform DNA, conferring on it an open structure. The RuvB hexamer acts as an ATP-dependent pump, pulling dsDNA into and through the RuvAB complex. HJ branch migration allows RuvC to scan DNA until it finds its consensus sequence, where it cleaves and resolves the cruciform DNA. The protein is Holliday junction branch migration complex subunit RuvA of Lysinibacillus sphaericus (strain C3-41).